The chain runs to 280 residues: Undecaprenyl-diphosphatase (280 aa).

8 helical membrane passes run 1-21 (MTILQAIVLAIVEGLTEFLPV), 41-61 (FVRAFTVMIQFGAILSVLVLY), 87-107 (FDLYWKLLIALVPAVILGFLF), 115-135 (LGSVWVVAVVLFLGGIFMLFV), 147-167 (ITYPKAFVIGLFQCLAIFLPG), 186-206 (KAAAEFSFFLAVPTMLGATLL), 226-246 (VLLVGNIVAFIVALAAIKFFI), and 260-280 (YRILVGGLLIVLMLSGVSLAV).

Belongs to the UppP family.

The protein resides in the cell inner membrane. The catalysed reaction is di-trans,octa-cis-undecaprenyl diphosphate + H2O = di-trans,octa-cis-undecaprenyl phosphate + phosphate + H(+). Its function is as follows. Catalyzes the dephosphorylation of undecaprenyl diphosphate (UPP). Confers resistance to bacitracin. This chain is Undecaprenyl-diphosphatase, found in Porphyromonas gingivalis (strain ATCC BAA-308 / W83).